The following is a 165-amino-acid chain: MTTRKTVDSRLLEWQTTCKHPVINLTPEKVDKLYHLKLKSESKNISSNRLLPISLSSLQKKMEKLFIKDKSHSHKPSLPDPKVPTLRTYKDGGFFISGKGSMKLPDIESAIHKFLWKKYGKGLVYCYGCDPTGKKRHTEWFNVPVLELPSVLRLIDSYCLGGESR.

This is an uncharacterized protein from Saccharomyces cerevisiae (strain ATCC 204508 / S288c) (Baker's yeast).